We begin with the raw amino-acid sequence, 523 residues long: 2-isopropylmalate synthase (523 aa).

In terms of domain architecture, Pyruvate carboxyltransferase spans 5–267; that stretch reads VIIFDTTLRD…HTRINHQEIW (263 aa). Mn(2+)-binding residues include Asp14, His202, His204, and Asn238. The regulatory domain stretch occupies residues 392 to 523; sequence RLEYFSVQSG…QNKEHNQETV (132 aa).

It belongs to the alpha-IPM synthase/homocitrate synthase family. LeuA type 1 subfamily. As to quaternary structure, homodimer. The cofactor is Mn(2+).

The protein localises to the cytoplasm. It catalyses the reaction 3-methyl-2-oxobutanoate + acetyl-CoA + H2O = (2S)-2-isopropylmalate + CoA + H(+). It functions in the pathway amino-acid biosynthesis; L-leucine biosynthesis; L-leucine from 3-methyl-2-oxobutanoate: step 1/4. Catalyzes the condensation of the acetyl group of acetyl-CoA with 3-methyl-2-oxobutanoate (2-ketoisovalerate) to form 3-carboxy-3-hydroxy-4-methylpentanoate (2-isopropylmalate). This Cronobacter sakazakii (strain ATCC BAA-894) (Enterobacter sakazakii) protein is 2-isopropylmalate synthase.